A 255-amino-acid polypeptide reads, in one-letter code: 5'-nucleotidase SurE (255 aa).

Residues Asp-8, Asp-9, Ser-40, and Asn-93 each coordinate a divalent metal cation.

Belongs to the SurE nucleotidase family. A divalent metal cation serves as cofactor.

The protein resides in the cytoplasm. It catalyses the reaction a ribonucleoside 5'-phosphate + H2O = a ribonucleoside + phosphate. Functionally, nucleotidase that shows phosphatase activity on nucleoside 5'-monophosphates. The chain is 5'-nucleotidase SurE from Rhodopseudomonas palustris (strain ATCC BAA-98 / CGA009).